The sequence spans 476 residues: MKPILPDYNNAGVLIIGDVMLDRYWYGPTSRISPEAPVPVVKVENNEERPGGAANVAMNIASLGGHARIVGLTGMDEPAKVLTETLNSLKVKCDFVALPEYPTITKLRVMSRGQQLIRLDFEDKFEGTDPELVLTRMERALPHVQAVILSDYAKGALEHVEALIAKARAANVPVFIDPKGTNFEPYRGATLLTPNMSEFEAVVGKVTSDDDLVEKALGLIEKFELGALLVTRSEHGMTLVRPDQKPFHLPTQAKEVYDVTGAGDTVISVLAASVAAGKPLDEACALANAAAGVVVGKLGTSTLSTIELAEAIHGSRDTDFGVIAEAALIDAVKAAQAKGEKVVMTNGCFDILHAGHVSYLNNAAKLGDRLIVAVNTDESVKRLKGPGRPVNPTDRRMAVLAGLGAVDWVVPFSEDTPQRLISEVLPDLLVKGGDYKPEDIAGGKEVIAAGGEVKVLNFEDGCSTTEIIDAIKGGRG.

A ribokinase region spans residues 1–318; it reads MKPILPDYNN…AEAIHGSRDT (318 aa). Position 195 to 198 (195 to 198) interacts with ATP; the sequence is NMSE. D264 is a catalytic residue. Residues 344–476 are cytidylyltransferase; that stretch reads MTNGCFDILH…IIDAIKGGRG (133 aa).

This sequence in the N-terminal section; belongs to the carbohydrate kinase PfkB family. In the C-terminal section; belongs to the cytidylyltransferase family. Homodimer.

The enzyme catalyses D-glycero-beta-D-manno-heptose 7-phosphate + ATP = D-glycero-beta-D-manno-heptose 1,7-bisphosphate + ADP + H(+). It carries out the reaction D-glycero-beta-D-manno-heptose 1-phosphate + ATP + H(+) = ADP-D-glycero-beta-D-manno-heptose + diphosphate. It functions in the pathway nucleotide-sugar biosynthesis; ADP-L-glycero-beta-D-manno-heptose biosynthesis; ADP-L-glycero-beta-D-manno-heptose from D-glycero-beta-D-manno-heptose 7-phosphate: step 1/4. The protein operates within nucleotide-sugar biosynthesis; ADP-L-glycero-beta-D-manno-heptose biosynthesis; ADP-L-glycero-beta-D-manno-heptose from D-glycero-beta-D-manno-heptose 7-phosphate: step 3/4. Its pathway is bacterial outer membrane biogenesis; LPS core biosynthesis. In terms of biological role, catalyzes the phosphorylation of D-glycero-D-manno-heptose 7-phosphate at the C-1 position to selectively form D-glycero-beta-D-manno-heptose-1,7-bisphosphate. Its function is as follows. Catalyzes the ADP transfer from ATP to D-glycero-beta-D-manno-heptose 1-phosphate, yielding ADP-D-glycero-beta-D-manno-heptose. This is Bifunctional protein HldE from Vibrio vulnificus (strain CMCP6).